We begin with the raw amino-acid sequence, 520 residues long: Phosphoenolpyruvate carboxykinase (ATP) (520 aa).

Positions 61, 196, and 202 each coordinate substrate. Residues lysine 202, histidine 222, and 238 to 246 (GLSGTGKTT) each bind ATP. The Mn(2+) site is built by lysine 202 and histidine 222. Aspartate 259 provides a ligand contact to Mn(2+). ATP contacts are provided by residues glutamate 287, arginine 324, 443 to 444 (RI), and threonine 449. Residue arginine 324 participates in substrate binding.

Belongs to the phosphoenolpyruvate carboxykinase (ATP) family. Mn(2+) serves as cofactor.

The protein resides in the cytoplasm. The enzyme catalyses oxaloacetate + ATP = phosphoenolpyruvate + ADP + CO2. It functions in the pathway carbohydrate biosynthesis; gluconeogenesis. Its function is as follows. Involved in the gluconeogenesis. Catalyzes the conversion of oxaloacetate (OAA) to phosphoenolpyruvate (PEP) through direct phosphoryl transfer between the nucleoside triphosphate and OAA. This Amoebophilus asiaticus (strain 5a2) protein is Phosphoenolpyruvate carboxykinase (ATP).